Here is a 236-residue protein sequence, read N- to C-terminus: Small ribosomal subunit protein uS2c (236 aa).

Belongs to the universal ribosomal protein uS2 family.

The protein localises to the plastid. It is found in the chloroplast. The polypeptide is Small ribosomal subunit protein uS2c (rps2) (Nandina domestica (Heavenly bamboo)).